We begin with the raw amino-acid sequence, 1127 residues long: Glutamate receptor-interacting protein 1 (1127 aa).

A lipid anchor (S-palmitoyl cysteine) is attached at glutamine 11. Residue serine 43 is modified to Phosphoserine. PDZ domains follow at residues 53 to 136 (VVEL…EYEL), 150 to 238 (TVEV…EYDV), 252 to 336 (LVEV…LPHH), 471 to 560 (EVVL…EFDV), 572 to 657 (HVKL…RKDE), and 672 to 754 (TVEL…KKQT). Disordered stretches follow at residues 752–802 (KQTD…PSVD), 840–865 (KQRT…SNED), and 942–980 (MARS…GRKS). 2 stretches are compositionally biased toward polar residues: residues 840–856 (KQRT…SQTY) and 947–973 (LGRQ…NTLP). The PDZ 7 domain maps to 1003–1085 (KVTLYKDSGM…KLDLVISRNP (83 aa)). The disordered stretch occupies residues 1108-1127 (FFQQPSHGGNLETREPTNTL).

Interacts with EFNB3, GRIA2, GRIA3, GRIPAP1/GRASP1, PPFIA1, PPFIA4, FRAS1, PTPRF, liprins-alpha and the C-terminal tail of PRLHR. Can form homomultimers or heteromultimers with GRIP2. Interacts with EFNB1, EPHA7, EPHB2, KIF5A, KIF5B and KIF5C. Forms a ternary complex with GRIA2 and CSPG4. Interacts with ATAD1 in an ATP-dependent manner. ATAD1-catalyzed ATP hydrolysis disrupts binding to ATAD1 and to GRIA2 and leads to AMPAR complex disassembly. Interacts with SLC30A9 and PLCD4. Interacts with BUD23. Forms a complex with NSG1, GRIA2 and STX12; controls the intracellular fate of AMPAR and the endosomal sorting of the GRIA2 subunit toward recycling and membrane targeting. Interacts with NSG1. Palmitoylation of isoform 2. As to expression, expressed in brain. Isoform 2 is the major isoform in brain. Expressed in oligodendrocyte lineage cells.

It is found in the membrane. The protein resides in the cytoplasmic vesicle. The protein localises to the perikaryon. Its subcellular location is the cell projection. It localises to the dendrite. It is found in the cytoplasm. The protein resides in the endomembrane system. The protein localises to the postsynaptic cell membrane. Its subcellular location is the postsynaptic density. It localises to the endoplasmic reticulum membrane. May play a role as a localized scaffold for the assembly of a multiprotein signaling complex and as mediator of the trafficking of its binding partners at specific subcellular location in neurons. Through complex formation with NSG1, GRIA2 and STX12 controls the intracellular fate of AMPAR and the endosomal sorting of the GRIA2 subunit toward recycling and membrane targeting. This chain is Glutamate receptor-interacting protein 1 (Grip1), found in Mus musculus (Mouse).